Reading from the N-terminus, the 276-residue chain is MSGELDAGVAKASLAAAQQVLDVQLSAEGADAGKTGEDLFAVTSLLDSSVGLRRALTDPSRSGAAKAEFVRRTLSGRITPAALETVVALASARWAAGRDLSDATERLAVVAVVTQAERSGHLDALEDELFRFARTVAGSPALRDALADRTAPDANRASLAARLLLGKASPETVQLARRAASSSRGMRAERLLEEWVEVVAKRREQLVAHVVSATPLTDAQRERLAATLSRQYGRAIRVNLDVDPHLVGGLRVSVGDDVIDGSISTRLDEARRRLAG.

This sequence belongs to the ATPase delta chain family. In terms of assembly, F-type ATPases have 2 components, F(1) - the catalytic core - and F(0) - the membrane proton channel. F(1) has five subunits: alpha(3), beta(3), gamma(1), delta(1), epsilon(1). F(0) has three main subunits: a(1), b(2) and c(10-14). The alpha and beta chains form an alternating ring which encloses part of the gamma chain. F(1) is attached to F(0) by a central stalk formed by the gamma and epsilon chains, while a peripheral stalk is formed by the delta and b chains.

It is found in the cell membrane. Its function is as follows. F(1)F(0) ATP synthase produces ATP from ADP in the presence of a proton or sodium gradient. F-type ATPases consist of two structural domains, F(1) containing the extramembraneous catalytic core and F(0) containing the membrane proton channel, linked together by a central stalk and a peripheral stalk. During catalysis, ATP synthesis in the catalytic domain of F(1) is coupled via a rotary mechanism of the central stalk subunits to proton translocation. In terms of biological role, this protein is part of the stalk that links CF(0) to CF(1). It either transmits conformational changes from CF(0) to CF(1) or is implicated in proton conduction. The protein is ATP synthase subunit delta of Kineococcus radiotolerans (strain ATCC BAA-149 / DSM 14245 / SRS30216).